The primary structure comprises 245 residues: NAD-dependent protein deacylase (245 aa).

Positions 1–245 constitute a Deacetylase sirtuin-type domain; that stretch reads MEAVWESARI…RLSRAMGIDI (245 aa). 22–41 contacts NAD(+); the sequence is GAGISAESGIPTFRGKDGLW. Residues Y66 and R69 each coordinate substrate. 100–103 is a binding site for NAD(+); sequence QNVD. The active-site Proton acceptor is H118. 4 residues coordinate Zn(2+): C126, C129, C146, and C149. NAD(+)-binding positions include 186–188, 212–214, and M241; these read GTS and NPE.

It belongs to the sirtuin family. Class III subfamily. It depends on Zn(2+) as a cofactor.

It localises to the cytoplasm. It catalyses the reaction N(6)-acetyl-L-lysyl-[protein] + NAD(+) + H2O = 2''-O-acetyl-ADP-D-ribose + nicotinamide + L-lysyl-[protein]. The catalysed reaction is N(6)-succinyl-L-lysyl-[protein] + NAD(+) + H2O = 2''-O-succinyl-ADP-D-ribose + nicotinamide + L-lysyl-[protein]. NAD-dependent lysine deacetylase and desuccinylase that specifically removes acetyl and succinyl groups on target proteins. Modulates the activities of several proteins which are inactive in their acylated form. Deacetylates the N-terminal lysine residue of Alba, the major archaeal chromatin protein and that, in turn, increases Alba's DNA binding affinity, thereby repressing transcription. This is NAD-dependent protein deacylase from Aeropyrum pernix (strain ATCC 700893 / DSM 11879 / JCM 9820 / NBRC 100138 / K1).